A 142-amino-acid chain; its full sequence is MQFKNILVVCIGNICRSPMAEYLLKQNYPQLTIHSAGISGMIGYSADEKAQLCMERIGIDMSPHIAKKLNAELLKQADLILVMSQNQQKHIEQTWPFAKGKTFRLGHWQGKNIPDPYQHDQAFFDETSLLIQTCVADWTKHI.

The Nucleophile role is filled by Cys-10. Residue Arg-16 is part of the active site. Asp-115 serves as the catalytic Proton donor.

Belongs to the low molecular weight phosphotyrosine protein phosphatase family.

The catalysed reaction is O-phospho-L-tyrosyl-[protein] + H2O = L-tyrosyl-[protein] + phosphate. It participates in glycan metabolism; exopolysaccharide biosynthesis. With respect to regulation, inhibited by ammonium molybdate, sodium orthovanadate, N-ethylmaleimide and iodoacetic acid. Functionally, dephosphorylates ptk. May be involved in the production and the transport of exopolysaccharides. The sequence is that of Low molecular weight protein-tyrosine-phosphatase Ptp (ptp) from Acinetobacter johnsonii.